A 796-amino-acid chain; its full sequence is RalBP1-associated Eps domain-containing protein 1 (796 aa).

Residues 10–113 (EQKYYSDLFS…SKNEQESRHA (104 aa)) enclose the EH 1 domain. The segment at 105-237 (KNEQESRHAA…ENWVSFADTP (133 aa)) is disordered. Positions 115-126 (SYSSDSENQGSY) are enriched in polar residues. A phosphoserine mark is found at Ser143, Ser145, Ser162, Ser166, and Ser170. A compositionally biased stretch (polar residues) spans 145–156 (SHDTVQPRTSAD). At Thr173 the chain carries Phosphothreonine. Residues Ser272 and Ser273 each carry the phosphoserine modification. Residues 285–374 (QRQYYVNQFK…ESLMPKLIDL (90 aa)) form the EH 2 domain. Position 288 is a phosphotyrosine (Tyr288). The residue at position 307 (Ser307) is a Phosphoserine. One can recognise an EF-hand domain in the interval 318 to 353 (LPILELSHIWELSDFDKDGALTLDEFCAAFHLVVAR). Residues Asp331, Asp333, Asp335, and Glu342 each coordinate Ca(2+). The segment at 377 to 433 (SADVGDQPGEVGYSGSPAEAPPSKSPSMPSLNQTWPELNQSSEQWETFSERSSSSQT) is disordered. Positions 407 to 433 (LNQTWPELNQSSEQWETFSERSSSSQT) are enriched in polar residues. A phosphoserine mark is found at Ser475, Ser482, Ser489, and Ser540. Over residues 506-543 (GNTVADGYSSSDSFTSDPEQIGSNVTRQRSHSGTSPDN) the composition is skewed to polar residues. 2 disordered regions span residues 506 to 624 (GNTV…IPEQ) and 638 to 725 (ASNV…QKTG). Thr544 is subject to Phosphothreonine. Over residues 544–554 (TAPPPPPPRPQ) the composition is skewed to pro residues. A Phosphoserine modification is found at Ser562. A compositionally biased stretch (polar residues) spans 563 to 574 (LDMNRTFTVTTG). Residues 575 to 584 (QQQAGVVAHP) are compositionally biased toward low complexity. Positions 585-596 (PAVPPRPQPSQA) are enriched in pro residues. Positions 612–623 (THTSTSPQQIPE) are enriched in polar residues. Residues 652-796 (HPEVLPAEKA…LEQLRPFSHL (145 aa)) form an interaction with RALBP1 region. Basic and acidic residues-rich tracts occupy residues 671 to 681 (AKTDSKTEEKT) and 708 to 722 (KSED…EHTQ). Phosphoserine is present on residues Ser709 and Ser740. Residues 751–791 (SIRRNKETNTVLARLNSELQQQLKDVLEERISLEVQLEQLR) are a coiled coil.

In terms of assembly, homodimer (Potential). Interacts with RAB11FIP2. Interacts with RALBP1, CRK and GRB2. Binding to RALBP1 does not affect its Ral-binding activity. Forms a complex with the SH3 domains of CRK and GRB2 which may link it to an EGF-responsive tyrosine kinase. Interacts with AMPH, ITSN1 (via SH3 domains) and SGIP1; may be involved in clathrin-mediated endocytosis. EGF stimulates phosphorylation on Tyr-residues. As to expression, widely expressed with highest levels in heart and testis.

Its subcellular location is the membrane. The protein localises to the clathrin-coated pit. May coordinate the cellular actions of activated EGF receptors and Ral-GTPases. In Homo sapiens (Human), this protein is RalBP1-associated Eps domain-containing protein 1 (REPS1).